A 295-amino-acid polypeptide reads, in one-letter code: Tyrosine recombinase XerC (295 aa).

In terms of domain architecture, Core-binding (CB) spans 1 to 85 (MHILLQKYYN…ALRQFLNYLV (85 aa)). A Tyr recombinase domain is found at 106–285 (YLPKNMDMEQ…DFQHLAQVYD (180 aa)). Catalysis depends on residues R145, K169, H237, R240, and H263. The active-site O-(3'-phospho-DNA)-tyrosine intermediate is Y272.

This sequence belongs to the 'phage' integrase family. XerC subfamily. As to quaternary structure, forms a cyclic heterotetrameric complex composed of two molecules of XerC and two molecules of XerD.

It localises to the cytoplasm. Site-specific tyrosine recombinase, which acts by catalyzing the cutting and rejoining of the recombining DNA molecules. The XerC-XerD complex is essential to convert dimers of the bacterial chromosome into monomers to permit their segregation at cell division. It also contributes to the segregational stability of plasmids. The chain is Tyrosine recombinase XerC from Histophilus somni (strain 2336) (Haemophilus somnus).